A 437-amino-acid polypeptide reads, in one-letter code: Mitochondrial distribution and morphology protein 12 (437 aa).

The region spanning 1–437 (MSIDINWRTA…VYPSFWTFLI (437 aa)) is the SMP-LTD domain. The span at 73 to 85 (DDDADTSDVSEDL) shows a compositional bias: acidic residues. Disordered regions lie at residues 73 to 101 (DDDA…SELN), 187 to 274 (SDSG…PPRM), and 354 to 384 (SEQQ…RQGG). Residues 91 to 101 (SQWDRTHSELN) are compositionally biased toward basic and acidic residues. Polar residues-rich tracts occupy residues 215 to 240 (DTSN…NNLN) and 371 to 381 (ADSSAHTSQKR).

This sequence belongs to the MDM12 family. Component of the ER-mitochondria encounter structure (ERMES) or MDM complex, composed of mmm1, mdm10, mdm12 and mdm34. A mmm1 homodimer associates with one molecule of mdm12 on each side in a pairwise head-to-tail manner, and the SMP-LTD domains of mmm1 and mdm12 generate a continuous hydrophobic tunnel for phospholipid trafficking.

It is found in the mitochondrion outer membrane. Its subcellular location is the endoplasmic reticulum membrane. Functionally, component of the ERMES/MDM complex, which serves as a molecular tether to connect the endoplasmic reticulum (ER) and mitochondria. Components of this complex are involved in the control of mitochondrial shape and protein biogenesis, and function in nonvesicular lipid trafficking between the ER and mitochondria. Mdm12 is required for the interaction of the ER-resident membrane protein mmm1 and the outer mitochondrial membrane-resident beta-barrel protein mdm10. The mdm12-mmm1 subcomplex functions in the major beta-barrel assembly pathway that is responsible for biogenesis of all mitochondrial outer membrane beta-barrel proteins, and acts in a late step after the SAM complex. The mdm10-mdm12-mmm1 subcomplex further acts in the TOM40-specific pathway after the action of the mdm12-mmm1 complex. Essential for establishing and maintaining the structure of mitochondria and maintenance of mtDNA nucleoids. This chain is Mitochondrial distribution and morphology protein 12, found in Aspergillus clavatus (strain ATCC 1007 / CBS 513.65 / DSM 816 / NCTC 3887 / NRRL 1 / QM 1276 / 107).